Consider the following 209-residue polypeptide: DNA ADP-ribosyl transferase (209 aa).

One can recognise a DarT domain in the interval 9–209 (TPIYHITHID…RVCIRKDWYY (201 aa)). NAD(+) contacts are provided by residues 13–15 (HIT), Gly22, and Leu30. Residues 35–53 (SPPKQRSIAYAHIQERRNR) are NAD(+)-binding element. The DNA-binding element occupies 44-50 (YAHIQER). NAD(+) is bound at residue Arg51. Residue Arg51 is the Proton acceptor of the active site. 3 consecutive DNA-binding regions follow at residues 75–80 (RSPMLY), 145–148 (SYWA), and 154–158 (REKKQ). The interval 116 to 160 (TDRHGVLSHARFFRQLEELAQLDWEAIQASYWADPPELREKKQAE) is ADP-ribosylating turn-turn loop. The active site involves Glu160.

The protein belongs to the DarT ADP-ribosyltransferase family. In terms of assembly, interacts with cognate antitoxin DarG (via C-terminus); this heterodimeric complex neutralizes the toxic effect of DarT by preventing ssDNA binding to DarT and consequently inactivating the toxin by direct protein-protein interactions.

The enzyme catalyses a thymidine in DNA + NAD(+) = an N-(ADP-alpha-D-ribosyl)-thymidine in DNA + nicotinamide + H(+). Its function is as follows. Toxic component of the hybrid type II/IV toxin-antitoxin (TA) system DarTG, which plays a crucial role in controlling bacterial growth and bacteriophage infection. In case of phage infection, DarT toxin ADP-ribosylates DNA, which inhibits both viral DNA and RNA synthesis and leads to abortive infection. ADP-ribosylates ssDNA on the second thymidine of the consensus sequence 5'-TNTC-3'; the protein does not auto-modify. Arg-51 is highly flexible, allowing it to assume multiple positions in the crystal structures. Its toxic effect is neutralized by cognate antitoxin DarG. This is DNA ADP-ribosyl transferase from Thermus sp. (strain 2.9).